The chain runs to 172 residues: Spore coat protein X (172 aa).

It localises to the spore coat. In Bacillus subtilis (strain 168), this protein is Spore coat protein X (cotX).